We begin with the raw amino-acid sequence, 906 residues long: Envelope glycoprotein B (906 aa).

A signal peptide spans 1–31 (MESRIWCLVVCVNLCIVCLGAAVSSSSTSHA). The span at 29-46 (SHATSSTHNGSHTSRTTS) shows a compositional bias: low complexity. The interval 29 to 51 (SHATSSTHNGSHTSRTTSAQTRS) is disordered. Over 32–750 (TSSTHNGSHT…EGVATFLKNP (719 aa)) the chain is Virion surface. 4 N-linked (GlcNAc...) asparagine; by host glycosylation sites follow: Asn-37, Asn-68, Asn-73, and Asn-85. 5 disulfides stabilise this stretch: Cys-94/Cys-550, Cys-111/Cys-506, Cys-185/Cys-250, Cys-246/Cys-250, and Cys-344/Cys-391. Residues 152 to 158 (SYAYIYT) are involved in fusion and/or binding to host membrane. N-linked (GlcNAc...) asparagine; by host glycosylation occurs at Asn-208. Residues 237-244 (GSTWLYRE) are involved in fusion and/or binding to host membrane. Asn-281, Asn-286, Asn-302, Asn-341, Asn-383, Asn-405, Asn-409, Asn-417, Asn-447, Asn-452, Asn-464, Asn-465, Asn-554, and Asn-585 each carry an N-linked (GlcNAc...) asparagine; by host glycan. Cys-573 and Cys-610 are disulfide-bonded. 2 hydrophobic membrane proximal region regions span residues 696–748 (VEDK…TFLK) and 727–747 (VAIG…ATFL). A helical membrane pass occupies residues 751 to 771 (FGAFTIILVAIAVVIITYLIY). Residues 772 to 906 (TRQRRLCTQP…LKDSDEEENV (135 aa)) are Intravirion-facing. Polar residues-rich tracts occupy residues 797-809 (VTSG…SLQA) and 859-876 (RAQQ…GTQD). Disordered regions lie at residues 797 to 837 (VTSG…TAAP) and 856 to 906 (AEQR…EENV). A compositionally biased stretch (basic and acidic residues) spans 877–886 (KGQKPNLLDR). An Internalization motif motif is present at residues 894 to 897 (YRHL).

It belongs to the herpesviridae glycoprotein B family. Homotrimer; disulfide-linked. Binds to heparan sulfate proteoglycans. Interacts with gH/gL heterodimer. Interacts with host TLR1 and TLR2. Interacts with host C-type lectin CD209/DC-SIGN. Interacts with host ITGB1, EGFR, and PDGFRA. In terms of processing, a proteolytic cleavage by host furin generates two subunits that remain linked by disulfide bonds.

Its subcellular location is the virion membrane. The protein localises to the host cell membrane. The protein resides in the host endosome membrane. It is found in the host Golgi apparatus membrane. In terms of biological role, envelope glycoprotein that plays a role in host cell entry, cell to-cell virus transmission, and fusion of infected cells. May be involved in the initial attachment via binding to heparan sulfate together with the gM/gN complex that binds heparin with higher affinity. Interacts with host integrin ITGB1, PDGFRA and EGFR that likely serve as postattachment entry receptors. Also participates in the fusion of viral and cellular membranes leading to virus entry into the host cell. Membrane fusion is mediated by the fusion machinery composed at least of gB and the heterodimer gH/gL. The sequence is that of Envelope glycoprotein B from Human cytomegalovirus (strain AD169) (HHV-5).